We begin with the raw amino-acid sequence, 582 residues long: Aspartate--tRNA ligase (582 aa).

Glutamate 174 lines the L-aspartate pocket. Residues 198–201 (QITK) are aspartate. Arginine 220 lines the L-aspartate pocket. ATP is bound by residues 220 to 222 (RDE) and glutamine 229. Residue histidine 443 coordinates L-aspartate. Glutamate 477 lines the ATP pocket. An L-aspartate-binding site is contributed by arginine 484. An ATP-binding site is contributed by 529–532 (GLDR).

The protein belongs to the class-II aminoacyl-tRNA synthetase family. Type 1 subfamily. Homodimer.

Its subcellular location is the cytoplasm. It catalyses the reaction tRNA(Asp) + L-aspartate + ATP = L-aspartyl-tRNA(Asp) + AMP + diphosphate. Functionally, catalyzes the attachment of L-aspartate to tRNA(Asp) in a two-step reaction: L-aspartate is first activated by ATP to form Asp-AMP and then transferred to the acceptor end of tRNA(Asp). This Streptococcus pyogenes serotype M6 (strain ATCC BAA-946 / MGAS10394) protein is Aspartate--tRNA ligase.